Reading from the N-terminus, the 201-residue chain is Orotate phosphoribosyltransferase (201 aa).

Residue 113–121 participates in 5-phospho-alpha-D-ribose 1-diphosphate binding; the sequence is EDIITTGKS. T117 and R145 together coordinate orotate.

It belongs to the purine/pyrimidine phosphoribosyltransferase family. PyrE subfamily. Homodimer. Mg(2+) serves as cofactor.

It catalyses the reaction orotidine 5'-phosphate + diphosphate = orotate + 5-phospho-alpha-D-ribose 1-diphosphate. It participates in pyrimidine metabolism; UMP biosynthesis via de novo pathway; UMP from orotate: step 1/2. Functionally, catalyzes the transfer of a ribosyl phosphate group from 5-phosphoribose 1-diphosphate to orotate, leading to the formation of orotidine monophosphate (OMP). The protein is Orotate phosphoribosyltransferase of Helicobacter acinonychis (strain Sheeba).